Consider the following 282-residue polypeptide: Bifunctional protein FolD (282 aa).

NADP(+) contacts are provided by residues 164–166 (GRS) and serine 189.

The protein belongs to the tetrahydrofolate dehydrogenase/cyclohydrolase family. In terms of assembly, homodimer.

The enzyme catalyses (6R)-5,10-methylene-5,6,7,8-tetrahydrofolate + NADP(+) = (6R)-5,10-methenyltetrahydrofolate + NADPH. The catalysed reaction is (6R)-5,10-methenyltetrahydrofolate + H2O = (6R)-10-formyltetrahydrofolate + H(+). It participates in one-carbon metabolism; tetrahydrofolate interconversion. Functionally, catalyzes the oxidation of 5,10-methylenetetrahydrofolate to 5,10-methenyltetrahydrofolate and then the hydrolysis of 5,10-methenyltetrahydrofolate to 10-formyltetrahydrofolate. The sequence is that of Bifunctional protein FolD from Lachnoclostridium phytofermentans (strain ATCC 700394 / DSM 18823 / ISDg) (Clostridium phytofermentans).